The chain runs to 228 residues: Urease accessory protein UreF (228 aa).

Belongs to the UreF family. In terms of assembly, ureD, UreF and UreG form a complex that acts as a GTP-hydrolysis-dependent molecular chaperone, activating the urease apoprotein by helping to assemble the nickel containing metallocenter of UreC. The UreE protein probably delivers the nickel.

It localises to the cytoplasm. Required for maturation of urease via the functional incorporation of the urease nickel metallocenter. The polypeptide is Urease accessory protein UreF (Yersinia pestis bv. Antiqua (strain Antiqua)).